Consider the following 398-residue polypeptide: Acetate kinase 1 (398 aa).

Residue Asn-9 participates in Mg(2+) binding. An ATP-binding site is contributed by Lys-16. Arg-89 contributes to the substrate binding site. Asp-146 (proton donor/acceptor) is an active-site residue. Residues 206-210 (HLGNG), 281-283 (DCR), and 329-333 (GIGEN) contribute to the ATP site. Glu-384 lines the Mg(2+) pocket.

Belongs to the acetokinase family. In terms of assembly, homodimer. Mg(2+) serves as cofactor. The cofactor is Mn(2+).

It localises to the cytoplasm. It carries out the reaction acetate + ATP = acetyl phosphate + ADP. It functions in the pathway metabolic intermediate biosynthesis; acetyl-CoA biosynthesis; acetyl-CoA from acetate: step 1/2. Its function is as follows. Catalyzes the formation of acetyl phosphate from acetate and ATP. Can also catalyze the reverse reaction. The polypeptide is Acetate kinase 1 (Aliivibrio fischeri (strain ATCC 700601 / ES114) (Vibrio fischeri)).